Reading from the N-terminus, the 1475-residue chain is Sex-determining transformer protein 2 (1475 aa).

A signal peptide spans 1–31; the sequence is MKLKYNKLLVSVVIVTFVTFGLLLAECFGKS. 11 consecutive transmembrane segments (helical) span residues 446–466, 474–494, 496–516, 589–609, 737–757, 902–922, 928–948, 952–972, 979–999, 1034–1054, and 1060–1080; these read TIHF…IFVW, AFMF…VCST, GVIV…LANL, WGCT…FIDS, GVIL…LLFI, AVGV…LFAF, AGIF…TPTI, FLFS…VHLF, IYTN…FCAL, IAQF…ICSI, and IFFV…FNSI. The interval 1133–1273 is interaction with fem-3; sequence EFSIKRSSPP…RERNLMNKRS (141 aa). 2 disordered regions span residues 1142–1194 and 1267–1330; these read PCRY…GDNT and NLMN…VDEP. Over residues 1178–1188 the composition is skewed to basic residues; that stretch reads RSPKTGNKRVR. Residues 1276-1310 are compositionally biased toward basic and acidic residues; sequence QRRESRNIEKMKKSQENLDKEKSEEKISESKKNQD. The interval 1392–1413 is MX regulatory domain; required for tra-1 binding; the sequence is CEDIYWTHRTGQLPPGLQVPRR. A disordered region spans residues 1424–1475; sequence TPPPEDLNWVPPAESPPIPIPQQAFDLLEERRRNHREQQDEAREGDLSDPEV. Positions 1451–1469 are enriched in basic and acidic residues; that stretch reads LEERRRNHREQQDEAREGD.

In terms of assembly, interacts with tra-1 and fem-3. Undergoes cleavage by tra-3 to produce a feminizing carboxy-terminal isoform Tra-2B. Somatic and germline tissues. Isoform Tra-2B is specific to oocytes.

The protein resides in the membrane. Functionally, plays a major role in controlling sexual cell fates. Promotes female development in XX animals where it sequesters one or more of the FEM proteins to the membrane thereby freeing the tra-1 protein (a putative transcription factor) to enter the nucleus and promote female development. In XO animals it acts as a receptor for her-1 which prevents it from binding to FEM proteins thereby repressing the activity of tra-1. Negatively regulates male development when bound to fem-3 and is required together with tra-1 for promoting spermatogenesis. Also required for feminizing tra-3 activity. The sequence is that of Sex-determining transformer protein 2 (tra-2) from Caenorhabditis elegans.